A 217-amino-acid polypeptide reads, in one-letter code: Peroxiredoxin Q, chloroplastic (217 aa).

A chloroplast-targeting transit peptide spans 1–66 (MAFAASTACC…RRRAASTGIV (66 aa)). Residues 70–217 (VSKGSVPPNF…GETLKIIQNL (148 aa)) enclose the Thioredoxin domain. C112 (cysteine sulfenic acid (-SOH) intermediate) is an active-site residue. Residues C112 and C117 are joined by a disulfide bond.

This sequence belongs to the peroxiredoxin family. BCP/PrxQ subfamily. As to quaternary structure, monomer.

It localises to the plastid. It is found in the chloroplast thylakoid lumen. The enzyme catalyses a hydroperoxide + [thioredoxin]-dithiol = an alcohol + [thioredoxin]-disulfide + H2O. Its function is as follows. Thiol-specific peroxidase that catalyzes the reduction of hydrogen peroxide and organic hydroperoxides to water and alcohols, respectively. Plays a role in cell protection against oxidative stress by detoxifying peroxides. The polypeptide is Peroxiredoxin Q, chloroplastic (PRX1) (Triticum aestivum (Wheat)).